We begin with the raw amino-acid sequence, 264 residues long: Phosphatidylglycerol--prolipoprotein diacylglyceryl transferase (264 aa).

7 helical membrane passes run 14-34, 60-80, 98-118, 128-148, 176-196, 203-223, and 240-260; these read IIFS…LIGF, LIYT…VFFY, GGMS…WVSF, ADFI…GNFI, SQLY…NWFI, GSVA…VEYV, and GQLL…WAYS. Position 143 (R143) interacts with a 1,2-diacyl-sn-glycero-3-phospho-(1'-sn-glycerol).

The protein belongs to the Lgt family.

Its subcellular location is the cell inner membrane. The catalysed reaction is L-cysteinyl-[prolipoprotein] + a 1,2-diacyl-sn-glycero-3-phospho-(1'-sn-glycerol) = an S-1,2-diacyl-sn-glyceryl-L-cysteinyl-[prolipoprotein] + sn-glycerol 1-phosphate + H(+). It functions in the pathway protein modification; lipoprotein biosynthesis (diacylglyceryl transfer). In terms of biological role, catalyzes the transfer of the diacylglyceryl group from phosphatidylglycerol to the sulfhydryl group of the N-terminal cysteine of a prolipoprotein, the first step in the formation of mature lipoproteins. This is Phosphatidylglycerol--prolipoprotein diacylglyceryl transferase from Actinobacillus pleuropneumoniae serotype 7 (strain AP76).